A 632-amino-acid polypeptide reads, in one-letter code: MSSQEASKMLRTYNIAWWGNNYYDVNELGHISVCPDPDVPEARVDLAKLVKAREAQGQRLPALFCFPQILQHRLRSINAAFKRARESYGYNGDYFLVYPIKVNQHRRVIESLIHSGEPLGLEAGSKAELMAVLAHAGMTRSVIVCNGYKDREYIRLALIGEKMGHKVYLVIEKMSEIAIVLEEAERLNVVPRLGVRARLASQGSGKWQSSGGEKSKFGLAATQVLQLVETLRDAGRLDSLQLLHFHLGSQMANIRDIATGVRESARFYVELHKLGVNIQCFDVGGGLGVDYEGTRSQSDCSVNYGLNEYANNIIWAIGDACEEHGLPHPMVITESGRAVTAHHTVLVSNIIGVERNEYTDPTAPAEDAPRALQNLWETWQEMHKPGTRRSLREWLHDSQMDLHDIHIGYSSGAFSLQERAWAEQLYLSMCHEVQKQLDPQNRAHRPIIDELQERMADKMYVNFSLFQSMPDAWGIDQLFPVLPLEGLDQVPERRAVLLDITCDSDGAIDHYIDGDGIATTMPMPEYDPENPPMLGFFMVGAYQEILGNMHNLFGDTEAVDVFVFPDGSVEVELSDEGDTVADMLQYVQLDPKTLLTHFRDQVKQTDLDDALQQQFLEEFEAGLYGYTYLEDE.

An N6-(pyridoxal phosphate)lysine modification is found at Lys-101. 281 to 291 (FDVGGGLGVDY) contributes to the substrate binding site.

It belongs to the Orn/Lys/Arg decarboxylase class-II family. SpeA subfamily. It depends on Mg(2+) as a cofactor. The cofactor is pyridoxal 5'-phosphate.

It carries out the reaction L-arginine + H(+) = agmatine + CO2. It functions in the pathway amine and polyamine biosynthesis; agmatine biosynthesis; agmatine from L-arginine: step 1/1. In terms of biological role, catalyzes the biosynthesis of agmatine from arginine. The sequence is that of Biosynthetic arginine decarboxylase from Salmonella dublin (strain CT_02021853).